Here is a 302-residue protein sequence, read N- to C-terminus: Dioxygenase olcK (302 aa).

3 residues coordinate Fe cation: histidine 136, aspartate 138, and histidine 213.

The protein belongs to the PhyH family. As to quaternary structure, homodimer. Requires Fe cation as cofactor.

It is found in the peroxisome matrix. The protein operates within secondary metabolite biosynthesis; terpenoid biosynthesis. In terms of biological role, dioxygenase; part of the gene cluster that mediates the biosynthesis of 15-deoxyoxalicine B. The first step of the pathway is the synthesis of nicotinyl-CoA from nicotinic acid by the nicotinic acid-CoA ligase olcI. Nicotinyl-CoA is then a substrate of polyketide synthase olcA to produce 4-hydroxy-6-(3-pyridinyl)-2H-pyran-2-one (HPPO) which is further prenylated by the polyprenyl transferase olcH to yield geranylgeranyl-HPPO. Geranylgeranyl pyrophosphate is provided by the cluster-specific geranylgeranyl pyrophosphate synthase olcC. The FAD-dependent monooxygenase olcE catalyzes the epoxidation of geranylgeranyl-HPPO and the terpene cyclase olcD catalyzes the cyclization of the terpenoid component, resulting in the formation of the tricyclic terpene moiety seen in predecaturin E. The cytochrome P450 monooxygenase then catalyzes the allylic oxidation of predecaturin E, which is followed by spirocylization with concomitant loss of one molecule of water to form decaturin E. Decaturin E is the substrate of the cytochrome P450 monooxygenase olcJ which hydroxylates it at the C-29 position to form decaturin F. The short-chain dehydrogenase/reductase olcF may catalyze the oxidation of decaturin F to generate the 29-hydroxyl-27-one intermediate, and subsequent hemiacetal formation probably leads to the formation of decaturin C. The dioxygenase olcK may be a peroxisomal enzyme that catalyzes the hydroxylation of decaturin C into decaturin A once decaturin C is shuttled into the peroxisome by the MFS transporter olcL. Finally the cytochrome P450 monooxygenase olcB catalyzes the oxidative rearrangement to yield 15-deoxyoxalicine B. In the absence of olcJ, decaturin E may be shunted to a pathway in which it is oxidized to a ketone, possibly by olcF, to form decaturin D, which undergoes further allylic oxidation to yield decaturin G. Moreover, in the absence of oclK or oclL, oclB can convert decaturin C into 15-deoxyoxalicine A. The sequence is that of Dioxygenase olcK from Penicillium canescens.